Consider the following 350-residue polypeptide: Phenylalanine--tRNA ligase alpha subunit (350 aa).

Glutamate 262 contributes to the Mg(2+) binding site.

The protein belongs to the class-II aminoacyl-tRNA synthetase family. Phe-tRNA synthetase alpha subunit type 1 subfamily. As to quaternary structure, tetramer of two alpha and two beta subunits. Mg(2+) serves as cofactor.

The protein localises to the cytoplasm. It carries out the reaction tRNA(Phe) + L-phenylalanine + ATP = L-phenylalanyl-tRNA(Phe) + AMP + diphosphate + H(+). The chain is Phenylalanine--tRNA ligase alpha subunit (pheS) from Thermus thermophilus (strain ATCC 27634 / DSM 579 / HB8).